The chain runs to 96 residues: UPF0235 protein CAB243 (96 aa).

The protein belongs to the UPF0235 family.

This chain is UPF0235 protein CAB243, found in Chlamydia abortus (strain DSM 27085 / S26/3) (Chlamydophila abortus).